A 1469-amino-acid polypeptide reads, in one-letter code: WASH complex subunit 2 (1469 aa).

Ser-136 bears the Phosphoserine mark. Disordered stretches follow at residues 178–349 (YDSK…RMPV) and 367–546 (KVQS…RVAG). Residues 197–206 (SDEKEPETKK) are compositionally biased toward basic and acidic residues. A Phosphoserine modification is found at Ser-227. 2 stretches are compositionally biased toward low complexity: residues 276-293 (SPPS…TSSP) and 306-316 (STASLSSSSSS). Residues 351 to 372 (LFNEDEFKSFMSEIVDKVQSKT) carry the LFa 1 motif. Polar residues predominate over residues 370–385 (SKTPSSSVSPATTIST). Positions 387–399 (EPPKTKKPVEEYP) are enriched in basic and acidic residues. Phosphoserine occurs at positions 422 and 426. The segment covering 519–528 (FDDDDLDIDD) has biased composition (acidic residues). The LFa 5 motif lies at 550 to 563 (LFEDDDQDDVTDLF). The tract at residues 571–591 (IPKETSSGVSPNKNVETPVAS) is disordered. A compositionally biased stretch (polar residues) spans 574–585 (ETSSGVSPNKNV). Ser-580 carries the post-translational modification Phosphoserine. Phosphothreonine is present on Thr-587. An LFa 6 motif is present at residues 595–605 (LFDDIEDEDLF). Disordered regions lie at residues 607–760 (TPKA…TDLF), 933–1254 (ALPN…KLFS), and 1316–1469 (VTTA…LDFK). Basic and acidic residues-rich tracts occupy residues 626–649 (GEDK…EKQH) and 671–687 (TEQK…KDDT). The residue at position 693 (Thr-693) is a Phosphothreonine. An LFa 8 motif is present at residues 698–709 (LFSEDLTDDELF). Composition is skewed to polar residues over residues 709–728 (FSST…TNEF), 735–745 (YTSQTEENVSP), and 938–956 (PSAT…SVSS). 3 stretches are compositionally biased toward basic and acidic residues: residues 971–990 (DNDH…KDEL), 1031–1042 (ETDRSEVKETPE), and 1077–1089 (RKQE…RDEP). Residues 1091–1109 (ATVQTEAEAPSSGQNTVSS) are compositionally biased toward polar residues. The segment covering 1118-1136 (NKSRARGPAKRRPSTRRGR) has biased composition (basic residues). Positions 1159–1170 (DSPEVEHSERSS) are enriched in basic and acidic residues. Residues Ser-1241, Ser-1245, Ser-1254, Ser-1344, Ser-1380, Ser-1381, and Ser-1408 each carry the phosphoserine modification. Composition is skewed to low complexity over residues 1417 to 1426 (FGGSSTSKAA) and 1434 to 1452 (AART…PTAT).

This sequence belongs to the FAM21 family. In terms of assembly, component of the WASH complex.

In terms of biological role, acts at least in part as component of the WASH complex which may regulate wash nucleation-promoting factor (NPF) activity and is required for its membrane targeting during endosomal sorting. The protein is WASH complex subunit 2 of Drosophila melanogaster (Fruit fly).